A 464-amino-acid chain; its full sequence is Argininosuccinate lyase (464 aa).

The protein belongs to the lyase 1 family. Argininosuccinate lyase subfamily.

It localises to the cytoplasm. The enzyme catalyses 2-(N(omega)-L-arginino)succinate = fumarate + L-arginine. It participates in amino-acid biosynthesis; L-arginine biosynthesis; L-arginine from L-ornithine and carbamoyl phosphate: step 3/3. This chain is Argininosuccinate lyase, found in Moorella thermoacetica (strain ATCC 39073 / JCM 9320).